A 163-amino-acid chain; its full sequence is Nucleotide-binding protein CYB_0891 (163 aa).

This sequence belongs to the YajQ family.

Functionally, nucleotide-binding protein. In Synechococcus sp. (strain JA-2-3B'a(2-13)) (Cyanobacteria bacterium Yellowstone B-Prime), this protein is Nucleotide-binding protein CYB_0891.